Here is a 266-residue protein sequence, read N- to C-terminus: Thymidylate synthase (266 aa).

Residue Arg24 coordinates dUMP. His54 provides a ligand contact to (6R)-5,10-methylene-5,6,7,8-tetrahydrofolate. 129–130 (RR) is a dUMP binding site. The active-site Nucleophile is the Cys149. DUMP-binding positions include 169 to 172 (RSAD), Asn180, and 210 to 212 (HIY). Asp172 is a binding site for (6R)-5,10-methylene-5,6,7,8-tetrahydrofolate. Ala265 lines the (6R)-5,10-methylene-5,6,7,8-tetrahydrofolate pocket.

This sequence belongs to the thymidylate synthase family. Bacterial-type ThyA subfamily. As to quaternary structure, homodimer.

It is found in the cytoplasm. It catalyses the reaction dUMP + (6R)-5,10-methylene-5,6,7,8-tetrahydrofolate = 7,8-dihydrofolate + dTMP. It participates in pyrimidine metabolism; dTTP biosynthesis. In terms of biological role, catalyzes the reductive methylation of 2'-deoxyuridine-5'-monophosphate (dUMP) to 2'-deoxythymidine-5'-monophosphate (dTMP) while utilizing 5,10-methylenetetrahydrofolate (mTHF) as the methyl donor and reductant in the reaction, yielding dihydrofolate (DHF) as a by-product. This enzymatic reaction provides an intracellular de novo source of dTMP, an essential precursor for DNA biosynthesis. The polypeptide is Thymidylate synthase (Nocardia farcinica (strain IFM 10152)).